The primary structure comprises 493 residues: Protein dml1 (493 aa).

This sequence belongs to the misato family.

The protein resides in the mitochondrion. In terms of biological role, involved in the partitioning of the mitochondrial organelle and mitochondrial DNA (mtDNA) inheritance. The chain is Protein dml1 (dml1) from Aspergillus oryzae (strain ATCC 42149 / RIB 40) (Yellow koji mold).